A 179-amino-acid chain; its full sequence is Methylated-DNA--protein-cysteine methyltransferase (179 aa).

C130 acts as the Nucleophile; methyl group acceptor in catalysis.

This sequence belongs to the MGMT family.

It localises to the cytoplasm. The enzyme catalyses a 6-O-methyl-2'-deoxyguanosine in DNA + L-cysteinyl-[protein] = S-methyl-L-cysteinyl-[protein] + a 2'-deoxyguanosine in DNA. It carries out the reaction a 4-O-methyl-thymidine in DNA + L-cysteinyl-[protein] = a thymidine in DNA + S-methyl-L-cysteinyl-[protein]. Involved in the cellular defense against the biological effects of O6-methylguanine (O6-MeG) and O4-methylthymine (O4-MeT) in DNA. Repairs the methylated nucleobase in DNA by stoichiometrically transferring the methyl group to a cysteine residue in the enzyme. This is a suicide reaction: the enzyme is irreversibly inactivated. This chain is Methylated-DNA--protein-cysteine methyltransferase, found in Haemophilus influenzae (strain ATCC 51907 / DSM 11121 / KW20 / Rd).